We begin with the raw amino-acid sequence, 469 residues long: 3-isopropylmalate dehydratase large subunit (469 aa).

Positions 347, 408, and 411 each coordinate [4Fe-4S] cluster.

This sequence belongs to the aconitase/IPM isomerase family. LeuC type 1 subfamily. In terms of assembly, heterodimer of LeuC and LeuD. [4Fe-4S] cluster serves as cofactor.

It catalyses the reaction (2R,3S)-3-isopropylmalate = (2S)-2-isopropylmalate. The protein operates within amino-acid biosynthesis; L-leucine biosynthesis; L-leucine from 3-methyl-2-oxobutanoate: step 2/4. Catalyzes the isomerization between 2-isopropylmalate and 3-isopropylmalate, via the formation of 2-isopropylmaleate. The sequence is that of 3-isopropylmalate dehydratase large subunit from Haemophilus influenzae (strain 86-028NP).